A 339-amino-acid chain; its full sequence is UDP-glucose 4-epimerase (339 aa).

NAD(+) contacts are provided by residues 12–13 (FI), 32–37 (DNLCNS), 59–60 (DI), 81–85 (FAGLK), Asn100, Ser125, Tyr150, Lys154, and Phe179. Residues Ser125 and Tyr150 each coordinate substrate. The active-site Proton acceptor is the Tyr150. Residues Asn180, 200 to 201 (NL), 217 to 219 (SVF), Arg232, and 293 to 296 (RAGD) each bind substrate.

It belongs to the NAD(P)-dependent epimerase/dehydratase family. In terms of assembly, homodimer. Requires NAD(+) as cofactor.

The catalysed reaction is UDP-alpha-D-glucose = UDP-alpha-D-galactose. It participates in carbohydrate metabolism; galactose metabolism. In terms of biological role, involved in the metabolism of galactose. Plays an essential role in the incorporation of galactose into meningococcal lipopolysaccharide surface molecules, which are important for pathogenesis. Catalyzes the conversion of UDP-galactose (UDP-Gal) to UDP-glucose (UDP-Glc) through a mechanism involving the transient reduction of NAD. This is UDP-glucose 4-epimerase (galE) from Neisseria meningitidis serogroup A / serotype 4A (strain DSM 15465 / Z2491).